Here is a 602-residue protein sequence, read N- to C-terminus: Elongation factor 4 (602 aa).

The region spanning 7–189 (RNIRNFSIIA…AIVQRIPAPQ (183 aa)) is the tr-type G domain. GTP-binding positions include 19-24 (DHGKST) and 136-139 (NKID).

The protein belongs to the TRAFAC class translation factor GTPase superfamily. Classic translation factor GTPase family. LepA subfamily.

Its subcellular location is the cell inner membrane. It catalyses the reaction GTP + H2O = GDP + phosphate + H(+). Required for accurate and efficient protein synthesis under certain stress conditions. May act as a fidelity factor of the translation reaction, by catalyzing a one-codon backward translocation of tRNAs on improperly translocated ribosomes. Back-translocation proceeds from a post-translocation (POST) complex to a pre-translocation (PRE) complex, thus giving elongation factor G a second chance to translocate the tRNAs correctly. Binds to ribosomes in a GTP-dependent manner. The chain is Elongation factor 4 from Xylella fastidiosa (strain M23).